Reading from the N-terminus, the 232-residue chain is Triggering receptor expressed on myeloid cells 1 (232 aa).

The signal sequence occupies residues Met1 to Ala20. The Ig-like V-type domain occupies Ala21–Arg125. Topologically, residues Ala21 to Ser203 are extracellular. A disulfide bridge links Cys41 with Cys109. Residues Pro152–Phe186 form a disordered region. Asn192 is a glycosylation site (N-linked (GlcNAc...) asparagine). Residues Ile204–Ala224 traverse the membrane as a helical segment. Residues Val225 to Ser232 are Cytoplasmic-facing.

As to quaternary structure, monomer. Homomultimer; when activated. Interacts with TYROBP/DAP12. Interacts with TLR4. In terms of tissue distribution, detected in bone marrow, tongue, lung, liver, thymus, spleen, jejunum, ileum and lymph nodes.

The protein resides in the cell membrane. Its function is as follows. Cell surface receptor that plays important roles in innate and adaptive immunity by amplifying inflammatory responses. Upon activation by various ligands such as PGLYRP1, HMGB1 or HSP70, multimerizes and forms a complex with transmembrane adapter TYROBP/DAP12. In turn, initiates a SYK-mediated cascade of tyrosine phosphorylation, activating multiple downstream mediators such as BTK, MAPK1, MAPK3 or phospholipase C-gamma. This cascade promotes the neutrophil- and macrophage-mediated release of pro-inflammatory cytokines and/or chemokines, as well as their migration and thereby amplifies inflammatory responses that are triggered by bacterial and fungal infections. By also promoting the amplification of inflammatory signals that are initially triggered by Toll-like receptor (TLR) and NOD-like receptor engagement, plays a major role in the pathophysiology of acute and chronic inflammatory diseases of different etiologies including septic shock and atherosclerosis. In Bos taurus (Bovine), this protein is Triggering receptor expressed on myeloid cells 1 (TREM1).